A 198-amino-acid chain; its full sequence is MARDMSPVLKRCRALGLEPTFLGIDKKSNRNFARAGKKISEYGTQLREKQKAKFIYGVLEKPFRNNFDKAKKLKYGTTGENLLILLELRLDNVMFRMGYGRTRTEARQIVDHKHVLVNGKCVNIPSYQVKAGDVISIKEKCKSAQRYKDILEVTDGRTVPAWLEADHENLTGTVKEIPTRDQIDVPVNEVLIVELYSK.

Residues 88-153 (LRLDNVMFRM…AQRYKDILEV (66 aa)) enclose the S4 RNA-binding domain.

The protein belongs to the universal ribosomal protein uS4 family. As to quaternary structure, part of the 30S ribosomal subunit. Contacts protein S5. The interaction surface between S4 and S5 is involved in control of translational fidelity.

Functionally, one of the primary rRNA binding proteins, it binds directly to 16S rRNA where it nucleates assembly of the body of the 30S subunit. With S5 and S12 plays an important role in translational accuracy. The polypeptide is Small ribosomal subunit protein uS4 (Lachnoclostridium phytofermentans (strain ATCC 700394 / DSM 18823 / ISDg) (Clostridium phytofermentans)).